The chain runs to 1488 residues: Phenolphthiocerol/phthiocerol polyketide synthase subunit E (1488 aa).

Residues 5–438 enclose the Ketosynthase family 3 (KS3) domain; sequence ENAIAVVGMA…GTNAHVVLEE (434 aa). Active-site for beta-ketoacyl synthase activity residues include C184, H320, and H361. An acyltransferase region spans residues 551–868; sequence VFLFPGQGAQ…GELWSAGVEV (318 aa). Residue S641 is the For malonyltransferase activity of the active site. One can recognise a Carrier domain in the interval 930 to 1004; it reads NGESQTEVTL…SLTAAVDASF (75 aa). S965 is modified (O-(pantetheine 4'-phosphoryl)serine). 1286 to 1331 lines the NADP(+) pocket; the sequence is EGVVAVELEGEGRSVLRPDVDLRRTVGWFTTYYPVPLACATGLGAL.

NADP(+) serves as cofactor. Requires pantetheine 4'-phosphate as cofactor.

The enzyme catalyses icosanoyl-[(phenol)carboxyphthiodiolenone synthase] + 2 (S)-methylmalonyl-CoA + 3 malonyl-CoA + 5 NADPH + 10 H(+) = C32-carboxyphthiodiolenone-[(phenol)carboxyphthiodiolenone synthase] + 5 CO2 + 5 NADP(+) + 5 CoA + 2 H2O. It catalyses the reaction docosanoyl-[(phenol)carboxyphthiodiolenone synthase] + 2 (S)-methylmalonyl-CoA + 3 malonyl-CoA + 5 NADPH + 10 H(+) = C34-carboxyphthiodiolenone-[(phenol)carboxyphthiodiolenone synthase] + 5 CO2 + 5 NADP(+) + 5 CoA + 2 H2O. The catalysed reaction is 17-(4-hydroxyphenyl)heptadecanoyl-[(phenol)carboxyphthiodiolenone synthase] + 2 (S)-methylmalonyl-CoA + 3 malonyl-CoA + 5 NADPH + 10 H(+) = C35-(phenol)carboxyphthiodiolenone-[(phenol)carboxyphthiodiolenone synthase] + 5 CO2 + 5 NADP(+) + 5 CoA + 2 H2O. It carries out the reaction 19-(4-hydroxyphenyl)nonadecanoyl-[(phenol)carboxyphthiodiolenone synthase] + 2 (S)-methylmalonyl-CoA + 3 malonyl-CoA + 5 NADPH + 10 H(+) = C37-(phenol)carboxyphthiodiolenone-[(phenol)carboxyphthiodiolenone synthase] + 5 CO2 + 5 NADP(+) + 5 CoA + 2 H2O. Its pathway is lipid metabolism; fatty acid biosynthesis. Functionally, part of the PpsABCDE complex involved in the biosynthesis of the lipid core common to phthiocerols and phenolphthiocerols by successive additions of malonyl-CoA or methylmalonyl-CoA extender units. PpsA can accept as substrate the activated forms of either icosanoyl (C20), docosanoyl (C22) or lignoceroyl (C24) groups from FadD26, or a (4-hydroxyphenyl)-C17 or (4-hydroxyphenyl)-C19 fatty acyl from FadD29. PpsA initiates the biosynthesis and extends its substrate using a malonyl-CoA extender unit. The PpsB and PpsC proteins add the second and third malonyl-CoA extender units. PpsD adds an (R)-methylmalonyl unit and PpsE adds a second (R)-methylmalonyl unit. The incorporation of the methylmalonyl units results in formation of two branched methyl groups in the elongated product. The chain is Phenolphthiocerol/phthiocerol polyketide synthase subunit E (ppsE) from Mycobacterium bovis (strain ATCC BAA-935 / AF2122/97).